The sequence spans 395 residues: Ribosomal RNA small subunit methyltransferase H (395 aa).

S-adenosyl-L-methionine is bound by residues 101–103 (GGH), Asp-120, Tyr-147, Asp-171, and Gln-178.

This sequence belongs to the methyltransferase superfamily. RsmH family.

The protein resides in the cytoplasm. The enzyme catalyses cytidine(1402) in 16S rRNA + S-adenosyl-L-methionine = N(4)-methylcytidine(1402) in 16S rRNA + S-adenosyl-L-homocysteine + H(+). Functionally, specifically methylates the N4 position of cytidine in position 1402 (C1402) of 16S rRNA. The protein is Ribosomal RNA small subunit methyltransferase H of Mycobacterium marinum (strain ATCC BAA-535 / M).